A 285-amino-acid polypeptide reads, in one-letter code: NAD kinase (285 aa).

Asp68 acts as the Proton acceptor in catalysis. NAD(+)-binding positions include 68–69 (DG), 142–143 (ND), Arg153, Lys170, Asp172, 183–188 (TAYNLS), and Gln242.

Belongs to the NAD kinase family. It depends on a divalent metal cation as a cofactor.

It localises to the cytoplasm. It catalyses the reaction NAD(+) + ATP = ADP + NADP(+) + H(+). Its function is as follows. Involved in the regulation of the intracellular balance of NAD and NADP, and is a key enzyme in the biosynthesis of NADP. Catalyzes specifically the phosphorylation on 2'-hydroxyl of the adenosine moiety of NAD to yield NADP. This is NAD kinase from Syntrophotalea carbinolica (strain DSM 2380 / NBRC 103641 / GraBd1) (Pelobacter carbinolicus).